Here is a 188-residue protein sequence, read N- to C-terminus: Methionine aminopeptidase (188 aa).

His60 provides a ligand contact to substrate. A divalent metal cation contacts are provided by Asp80, Asp91, and His164. Substrate is bound at residue His172.

This sequence belongs to the peptidase M24A family. Methionine aminopeptidase archaeal type 2 subfamily. In terms of assembly, monomer. Co(2+) is required as a cofactor. The cofactor is Zn(2+). Requires Mn(2+) as cofactor. It depends on Fe(2+) as a cofactor.

The enzyme catalyses Release of N-terminal amino acids, preferentially methionine, from peptides and arylamides.. Its function is as follows. Removes the N-terminal methionine from nascent proteins. The N-terminal methionine is often cleaved when the second residue in the primary sequence is small and uncharged (Met-Ala-, Cys, Gly, Pro, Ser, Thr, or Val). The polypeptide is Methionine aminopeptidase (map) (Methanothermus fervidus).